Here is a 324-residue protein sequence, read N- to C-terminus: Phospho-N-acetylmuramoyl-pentapeptide-transferase (324 aa).

Helical transmembrane passes span 9 to 29, 53 to 73, 77 to 97, 117 to 137, 149 to 169, 176 to 196, 201 to 221, 227 to 247, 253 to 273, and 304 to 324; these read TFAVAFIITVIGVPLFIPFLV, TMGAVIFITAMLISFLIFSFI, VSAATWLLFITLALFGALGFL, FLGQVAISILFYLVYHFSDFA, IDLGWFFIIFILFWLVGFSNA, LDGLVSGLSVIAFSAFGVIAF, MDVAIFCFAIVGGMLGFLLFN, IFMGDTGSLALGGSIAAVSIL, LLLLIGIIFVIETASVILQVF, and VLTFWGIGLIGAIISVCVVIF.

The protein belongs to the glycosyltransferase 4 family. MraY subfamily. Mg(2+) serves as cofactor.

It is found in the cell membrane. It catalyses the reaction UDP-N-acetyl-alpha-D-muramoyl-L-alanyl-gamma-D-glutamyl-meso-2,6-diaminopimeloyl-D-alanyl-D-alanine + di-trans,octa-cis-undecaprenyl phosphate = di-trans,octa-cis-undecaprenyl diphospho-N-acetyl-alpha-D-muramoyl-L-alanyl-D-glutamyl-meso-2,6-diaminopimeloyl-D-alanyl-D-alanine + UMP. It participates in cell wall biogenesis; peptidoglycan biosynthesis. Functionally, catalyzes the initial step of the lipid cycle reactions in the biosynthesis of the cell wall peptidoglycan: transfers peptidoglycan precursor phospho-MurNAc-pentapeptide from UDP-MurNAc-pentapeptide onto the lipid carrier undecaprenyl phosphate, yielding undecaprenyl-pyrophosphoryl-MurNAc-pentapeptide, known as lipid I. The sequence is that of Phospho-N-acetylmuramoyl-pentapeptide-transferase from Listeria innocua serovar 6a (strain ATCC BAA-680 / CLIP 11262).